A 263-amino-acid polypeptide reads, in one-letter code: Superoxide dismutase [Fe] 3, chloroplastic (263 aa).

The transit peptide at 1-41 directs the protein to the chloroplast; the sequence is MSSCVVTTSCFYTISDSSIRLKSPKLLNLSNQQRRRSLRSR. Histidine 74, histidine 127, aspartate 211, and histidine 215 together coordinate Fe cation.

It belongs to the iron/manganese superoxide dismutase family. As to quaternary structure, homodimer. Heterodimer with FSD2. Interacts with MRL7. Fe cation is required as a cofactor.

Its subcellular location is the plastid. It is found in the chloroplast thylakoid. The catalysed reaction is 2 superoxide + 2 H(+) = H2O2 + O2. Its activity is regulated as follows. Activated by cpn20/cpn21 (in vitro). In terms of biological role, destroys superoxide anion radicals which are normally produced within the cells and which are toxic to biological systems. Plays important role in chloroplast development, particularly in the maintenance of thylakoids membranes. Seems to act as a heterodimer with FSD2. The protein is Superoxide dismutase [Fe] 3, chloroplastic of Arabidopsis thaliana (Mouse-ear cress).